The chain runs to 427 residues: Trigger factor (427 aa).

The PPIase FKBP-type domain occupies 163-248 (GDTVVIDFVG…IHEVKAKEVP (86 aa)).

Belongs to the FKBP-type PPIase family. Tig subfamily.

It localises to the cytoplasm. The catalysed reaction is [protein]-peptidylproline (omega=180) = [protein]-peptidylproline (omega=0). In terms of biological role, involved in protein export. Acts as a chaperone by maintaining the newly synthesized protein in an open conformation. Functions as a peptidyl-prolyl cis-trans isomerase. The polypeptide is Trigger factor (Streptococcus pneumoniae (strain ATCC 700669 / Spain 23F-1)).